A 113-amino-acid chain; its full sequence is 4-cresol dehydrogenase [hydroxylating] cytochrome c subunit (113 aa).

An N-terminal signal peptide occupies residues 1–33; it reads MTFPFSGAAVKRMLVTGVVLPFGLLVAAGQAQA. Heme c contacts are provided by cysteine 48, cysteine 51, histidine 52, and methionine 83.

As to quaternary structure, tetramer of two cytochrome subunits and two flavoprotein subunits. Post-translationally, binds 1 heme c group covalently per subunit.

It participates in aromatic compound metabolism; p-cresol degradation. Functionally, this is the heme-containing component of the p-cresol methylhydroxylase. It accepts electrons from the flavoprotein subunit. The chain is 4-cresol dehydrogenase [hydroxylating] cytochrome c subunit (pchC) from Pseudomonas putida (Arthrobacter siderocapsulatus).